An 86-amino-acid chain; its full sequence is Mu-theraphotoxin-Hhn1c (86 aa).

The N-terminal stretch at 1–21 (MKASMFLALAGLALLFVVCYA) is a signal peptide. A propeptide spanning residues 22–49 (SESEEKEFSNELLSSVLAVDDNSKGEER) is cleaved from the precursor. Cystine bridges form between cysteine 51–cysteine 66, cysteine 58–cysteine 73, and cysteine 65–cysteine 80. The residue at position 84 (isoleucine 84) is an Isoleucine amide.

It belongs to the neurotoxin 10 (Hwtx-1) family. 22 (Htx-4) subfamily. As to quaternary structure, monomer. Expressed by the venom gland.

Its subcellular location is the secreted. Functionally, neurotoxin. Selectively blocks neuronal tetrodotoxin-sensitive voltage-gated sodium channels (Nav). Does not affect tetrodotoxin-resistant voltage-gated sodium channels or calcium channels. This Cyriopagopus hainanus (Chinese bird spider) protein is Mu-theraphotoxin-Hhn1c.